We begin with the raw amino-acid sequence, 156 residues long: Mediator of RNA polymerase II transcription subunit 28 (156 aa).

The interval 1–38 is disordered; the sequence is MDYQQKPPQSSDPSPSPPDRPPGIRSPETPSNNQNNDI. The stretch at 104-156 forms a coiled coil; that stretch reads PSRAESLKKDIAVMEEELKTKDELIKKHMRLFQESQKLVKEQIEKHRDELEKV.

Belongs to the Mediator complex subunit 28 family. In terms of assembly, dimers. Component of the Mediator complex. Interacts with GEBPL.

It is found in the nucleus. Functionally, component of the Mediator complex, a coactivator involved in the regulated transcription of nearly all RNA polymerase II-dependent genes. Mediator functions as a bridge to convey information from gene-specific regulatory proteins to the basal RNA polymerase II transcription machinery. The Mediator complex, having a compact conformation in its free form, is recruited to promoters by direct interactions with regulatory proteins and serves for the assembly of a functional pre-initiation complex with RNA polymerase II and the general transcription factors. The polypeptide is Mediator of RNA polymerase II transcription subunit 28 (Arabidopsis thaliana (Mouse-ear cress)).